The sequence spans 545 residues: CTP synthase (545 aa).

The tract at residues Met-1–Leu-266 is amidoligase domain. Ser-14 provides a ligand contact to CTP. Residue Ser-14 participates in UTP binding. Residues Ser-15–Ile-20 and Asp-72 each bind ATP. Asp-72 and Glu-140 together coordinate Mg(2+). Residues Asp-147 to Glu-149, Lys-187 to Gln-192, and Lys-223 contribute to the CTP site. Residues Lys-187 to Gln-192 and Lys-223 each bind UTP. Lys-239–Val-241 is a binding site for ATP. The Glutamine amidotransferase type-1 domain maps to Thr-291–Gly-542. Residue Gly-352 participates in L-glutamine binding. The active-site Nucleophile; for glutamine hydrolysis is Cys-379. Residues Leu-380–Gln-383, Glu-403, and Arg-470 contribute to the L-glutamine site. Catalysis depends on residues His-515 and Glu-517.

This sequence belongs to the CTP synthase family. Homotetramer.

The enzyme catalyses UTP + L-glutamine + ATP + H2O = CTP + L-glutamate + ADP + phosphate + 2 H(+). It catalyses the reaction L-glutamine + H2O = L-glutamate + NH4(+). It carries out the reaction UTP + NH4(+) + ATP = CTP + ADP + phosphate + 2 H(+). It functions in the pathway pyrimidine metabolism; CTP biosynthesis via de novo pathway; CTP from UDP: step 2/2. Allosterically activated by GTP, when glutamine is the substrate; GTP has no effect on the reaction when ammonia is the substrate. The allosteric effector GTP functions by stabilizing the protein conformation that binds the tetrahedral intermediate(s) formed during glutamine hydrolysis. Inhibited by the product CTP, via allosteric rather than competitive inhibition. Functionally, catalyzes the ATP-dependent amination of UTP to CTP with either L-glutamine or ammonia as the source of nitrogen. Regulates intracellular CTP levels through interactions with the four ribonucleotide triphosphates. This Photorhabdus laumondii subsp. laumondii (strain DSM 15139 / CIP 105565 / TT01) (Photorhabdus luminescens subsp. laumondii) protein is CTP synthase.